The following is a 1004-amino-acid chain: Liprin-beta homolog (1004 aa).

Low complexity-rich tracts occupy residues 50 to 63 (NGNS…TIGS) and 149 to 161 (SPPS…SSSL). Disordered regions lie at residues 50–122 (NGNS…RSSR) and 135–161 (HRTD…SSSL). Coiled-coil stretches lie at residues 280 to 328 (CQEL…VNQS) and 364 to 396 (DEMS…ALDE). 4 disordered regions span residues 341–366 (HTNG…DDEM), 432–497 (PSDS…GGNQ), 528–550 (NGNE…GKAS), and 648–686 (FSKL…LGTV). Over residues 434-453 (DSMSHSTSFPVSLSSTTSNG) the composition is skewed to polar residues. Residues 458-474 (STVQSSSSYNSSLSAVS) are compositionally biased toward low complexity. Polar residues-rich tracts occupy residues 531 to 541 (EGANHNYSSAS) and 648 to 684 (FSKL…NHLG). SAM domains lie at 698–762 (WRSE…IEED), 770–833 (WDVH…LKKA), and 858–930 (VVRW…LLGP).

Belongs to the liprin family. Liprin-beta subfamily. Expressed in pharyngeal muscle, particularly posterior bulb, adjacent to the dorsal and ventral cord (but not in ventral cord neurons), and in body wall muscles.

In terms of biological role, involved in the regulation of synaptic function at neuromuscular junctions. Together with the liprin-alpha protein syd-2, may play a role in regulating the structure of the neuronal region, called the active zone, from which synaptic vesicles send neurotransmitter signals across the synapse. Does not seem to be required for neuronal development. May regulate the disassembly of focal adhesions. Does not bind receptor-like tyrosine phosphatases type 2A. This is Liprin-beta homolog from Caenorhabditis elegans.